The following is a 416-amino-acid chain: Gamma-glutamyl phosphate reductase (416 aa).

This sequence belongs to the gamma-glutamyl phosphate reductase family.

Its subcellular location is the cytoplasm. It catalyses the reaction L-glutamate 5-semialdehyde + phosphate + NADP(+) = L-glutamyl 5-phosphate + NADPH + H(+). The protein operates within amino-acid biosynthesis; L-proline biosynthesis; L-glutamate 5-semialdehyde from L-glutamate: step 2/2. Functionally, catalyzes the NADPH-dependent reduction of L-glutamate 5-phosphate into L-glutamate 5-semialdehyde and phosphate. The product spontaneously undergoes cyclization to form 1-pyrroline-5-carboxylate. The polypeptide is Gamma-glutamyl phosphate reductase (Glaesserella parasuis serovar 5 (strain SH0165) (Haemophilus parasuis)).